Here is a 573-residue protein sequence, read N- to C-terminus: FAD-dependent monooxygenase resA (573 aa).

The first 17 residues, 1-17, serve as a signal peptide directing secretion; that stretch reads MYDVIVIGAGWCGLVAA. FAD is bound at residue Ile-106. A glycan (N-linked (GlcNAc...) asparagine) is linked at Asn-235.

The protein belongs to the FAD-binding monooxygenase family. Requires FAD as cofactor.

Its pathway is antifungal biosynthesis. FAD-dependent monooxygenase; part of the gene cluster that mediates the biosynthesis of the tetrahydropyranyl antifungal agent restricticin that acts as an inhibitor of CYP51 and blocks the ergosterol biosynthesis. The highly reducing polyketide synthase resH, the short chain dehydrogenase resG, the cyclase resF, the FAD-dependent monooxygenase resA and the enoylreductase resD are required to generate the first stable intermediate desmethylrestrictinol. ResH with resD biosynthesize the first polyketide chain intermediate that is reduced by resG, followed by epoxidation by resA before 6-endo cyclization via epoxide opening by resF leads to desmethylrestrictinol. The methyltransferase resE then catalyzes the C4 O-methylation of desmethylrestrictinol to produce restrictinol, and the nonribosomal peptide synthetase resC catalyzes the C3 esterification of restrictinol with glycine that leads to restricticin. The protein is FAD-dependent monooxygenase resA of Aspergillus sclerotiorum.